The primary structure comprises 447 residues: MTKIITRFAPSPTGMLHVGNIRAALLNWLYAKKHNGQFILRFDDTDLERSKQEYKDAIEEDLKFLNLNWDQTFNQLSRLSRYDEIKNLLLDKKRLYACYETPEELELKRKFQLSKGLPPIYDRASLNLTEEQTQKYIEQGRKPHYRFLVNHEPISWHDMIKGEVKYDGKALSEPIVIRADGSMTYMLCSVIDDIDYDITHIIRGEDHVSNTAIQIQMFEALNTTPPTFGHLSLIINKDEKISKRVGGFEITTLRKEIGLEAMAIASFFSLLGSSAQILPYKSMEKLANQFEISSFSKSPTIYQPEDLERLNHKLLISLDFDEVKNHLKEIDAEYIDENFWLSVRPNLQKLRDVKDWWEICHKTPNVKSLNLDKEYLKQAAEVLPQGKITKDSWSIWTKEITNITGKKGKELFLPLRLALTGRESGPEIASVLPLIDREEIIKRLTSA.

The 'HIGH' region motif lies at 10 to 20; sequence PSPTGMLHVGN. Positions 240–244 match the 'KMSKS' region motif; sequence KISKR. Lysine 243 contacts ATP.

The protein belongs to the class-I aminoacyl-tRNA synthetase family. Glutamate--tRNA ligase type 1 subfamily. Monomer.

Its subcellular location is the cytoplasm. The catalysed reaction is tRNA(Glu) + L-glutamate + ATP = L-glutamyl-tRNA(Glu) + AMP + diphosphate. In terms of biological role, catalyzes the attachment of glutamate to tRNA(Glu) in a two-step reaction: glutamate is first activated by ATP to form Glu-AMP and then transferred to the acceptor end of tRNA(Glu). The chain is Glutamate--tRNA ligase 1 from Rickettsia felis (strain ATCC VR-1525 / URRWXCal2) (Rickettsia azadi).